Here is a 281-residue protein sequence, read N- to C-terminus: Bifunctional protein FolD (281 aa).

NADP(+) contacts are provided by residues 165 to 167 (GRG), Thr-192, and Val-233.

Belongs to the tetrahydrofolate dehydrogenase/cyclohydrolase family. In terms of assembly, homodimer.

The enzyme catalyses (6R)-5,10-methylene-5,6,7,8-tetrahydrofolate + NADP(+) = (6R)-5,10-methenyltetrahydrofolate + NADPH. It catalyses the reaction (6R)-5,10-methenyltetrahydrofolate + H2O = (6R)-10-formyltetrahydrofolate + H(+). Its pathway is one-carbon metabolism; tetrahydrofolate interconversion. Its function is as follows. Catalyzes the oxidation of 5,10-methylenetetrahydrofolate to 5,10-methenyltetrahydrofolate and then the hydrolysis of 5,10-methenyltetrahydrofolate to 10-formyltetrahydrofolate. The polypeptide is Bifunctional protein FolD (Mycobacterium avium (strain 104)).